The primary structure comprises 691 residues: DNA ligase (691 aa).

Residues 41-45 (DAEYD), 90-91 (SL), and E130 contribute to the NAD(+) site. Residue K132 is the N6-AMP-lysine intermediate of the active site. 4 residues coordinate NAD(+): R153, E190, K307, and K331. Residues C425, C428, C443, and C449 each contribute to the Zn(2+) site. The 82-residue stretch at 610–691 (APQGVLAGKT…MHTLLEGHAR (82 aa)) folds into the BRCT domain.

The protein belongs to the NAD-dependent DNA ligase family. LigA subfamily. It depends on Mg(2+) as a cofactor. Requires Mn(2+) as cofactor.

It catalyses the reaction NAD(+) + (deoxyribonucleotide)n-3'-hydroxyl + 5'-phospho-(deoxyribonucleotide)m = (deoxyribonucleotide)n+m + AMP + beta-nicotinamide D-nucleotide.. Functionally, DNA ligase that catalyzes the formation of phosphodiester linkages between 5'-phosphoryl and 3'-hydroxyl groups in double-stranded DNA using NAD as a coenzyme and as the energy source for the reaction. It is essential for DNA replication and repair of damaged DNA. The chain is DNA ligase from Burkholderia pseudomallei (strain 1710b).